A 657-amino-acid polypeptide reads, in one-letter code: UvrABC system protein B (657 aa).

The Helicase ATP-binding domain maps to 25-182 (NSIKSNNRAQ…KKLIEIQYER (158 aa)). Residue 38 to 45 (GVTGSGKT) coordinates ATP. The Beta-hairpin motif lies at 91–114 (YYDYYQPEAYVPQTDTFIEKDASI). In terms of domain architecture, Helicase C-terminal spans 429-595 (QIDDLYGEIN…TIIKDVRDII (167 aa)). The 36-residue stretch at 621–656 (DKLIKDLTEEMLLAAKNLQFERAAELRDIINEIKDG) folds into the UVR domain.

Belongs to the UvrB family. As to quaternary structure, forms a heterotetramer with UvrA during the search for lesions. Interacts with UvrC in an incision complex.

Its subcellular location is the cytoplasm. Functionally, the UvrABC repair system catalyzes the recognition and processing of DNA lesions. A damage recognition complex composed of 2 UvrA and 2 UvrB subunits scans DNA for abnormalities. Upon binding of the UvrA(2)B(2) complex to a putative damaged site, the DNA wraps around one UvrB monomer. DNA wrap is dependent on ATP binding by UvrB and probably causes local melting of the DNA helix, facilitating insertion of UvrB beta-hairpin between the DNA strands. Then UvrB probes one DNA strand for the presence of a lesion. If a lesion is found the UvrA subunits dissociate and the UvrB-DNA preincision complex is formed. This complex is subsequently bound by UvrC and the second UvrB is released. If no lesion is found, the DNA wraps around the other UvrB subunit that will check the other stand for damage. The chain is UvrABC system protein B from Clostridium beijerinckii (strain ATCC 51743 / NCIMB 8052) (Clostridium acetobutylicum).